The following is a 358-amino-acid chain: 3'(2'),5'-bisphosphate nucleotidase 2 (358 aa).

Asp-54 acts as the Proton acceptor in catalysis. Residues Glu-77, Asp-141, Ile-143, and Asp-144 each coordinate Mg(2+). The active-site Proton acceptor is the Thr-146. The adenosine 3',5'-bisphosphate site is built by Thr-146, His-243, Ser-272, Lys-275, Arg-289, and Asp-302. Residues His-243, Ser-272, Lys-275, Arg-289, and Asp-302 each coordinate AMP. Mg(2+) is bound at residue Asp-302.

Belongs to the inositol monophosphatase superfamily. Mg(2+) serves as cofactor.

It carries out the reaction 3'-phosphoadenylyl sulfate + H2O = adenosine 5'-phosphosulfate + phosphate. The catalysed reaction is adenosine 3',5'-bisphosphate + H2O = AMP + phosphate. It catalyses the reaction adenosine 2',5'-bisphosphate + H2O = AMP + phosphate. Its function is as follows. Phosphatase that converts adenosine 3'-phosphate 5'-phosphosulfate (PAPS) to adenosine 5'-phosphosulfate (APS) and 3'(2')-phosphoadenosine 5'-phosphate (PAP) to AMP. Regulates the flux of sulfur in the sulfur-activation pathway by converting PAPS to APS. Involved in salt tolerance. The polypeptide is 3'(2'),5'-bisphosphate nucleotidase 2 (HAL22) (Candida albicans (strain SC5314 / ATCC MYA-2876) (Yeast)).